The primary structure comprises 216 residues: Potassium-transporting ATPase KdpC subunit (216 aa).

Residues 12 to 32 form a helical membrane-spanning segment; sequence LLGVSLLVFGLLYQGSLMAIG. A compositionally biased stretch (polar residues) spans 197-207; it reads QNETDQNSDMN. Residues 197 to 216 are disordered; that stretch reads QNETDQNSDMNASEIANGDH.

The protein belongs to the KdpC family. In terms of assembly, the system is composed of three essential subunits: KdpA, KdpB and KdpC. The complex also contains KdpF, a small non-essential subunit.

The protein resides in the cell membrane. Its function is as follows. Part of the high-affinity ATP-driven potassium transport (or Kdp) system, which catalyzes the hydrolysis of ATP coupled with the electrogenic transport of potassium into the cytoplasm. This subunit acts as a catalytic chaperone that increases the ATP-binding affinity of the ATP-hydrolyzing subunit KdpB by the formation of a transient KdpB/KdpC/ATP ternary complex. The Kdp system is essential for growth under K(+) limitation, and for survival under desiccation and salt crystal inclusion. The sequence is that of Potassium-transporting ATPase KdpC subunit from Halobacterium salinarum (strain ATCC 29341 / DSM 671 / R1).